The sequence spans 209 residues: Thymidylate kinase (209 aa).

10–17 is an ATP binding site; sequence GLDGAGKS.

Belongs to the thymidylate kinase family.

It catalyses the reaction dTMP + ATP = dTDP + ADP. Phosphorylation of dTMP to form dTDP in both de novo and salvage pathways of dTTP synthesis. In Francisella tularensis subsp. novicida (strain U112), this protein is Thymidylate kinase.